The chain runs to 83 residues: ATP synthase subunit c (83 aa).

The next 2 helical transmembrane spans lie at 9-29 and 51-71; these read LICVGAALSIGLAGLGAGIGI and MVFMILGMALAESIAIYGLVI.

This sequence belongs to the ATPase C chain family. F-type ATPases have 2 components, F(1) - the catalytic core - and F(0) - the membrane proton channel. F(1) has five subunits: alpha(3), beta(3), gamma(1), delta(1), epsilon(1). F(0) has three main subunits: a(1), b(2) and c(10-14). The alpha and beta chains form an alternating ring which encloses part of the gamma chain. F(1) is attached to F(0) by a central stalk formed by the gamma and epsilon chains, while a peripheral stalk is formed by the delta and b chains.

The protein resides in the cell inner membrane. Functionally, f(1)F(0) ATP synthase produces ATP from ADP in the presence of a proton or sodium gradient. F-type ATPases consist of two structural domains, F(1) containing the extramembraneous catalytic core and F(0) containing the membrane proton channel, linked together by a central stalk and a peripheral stalk. During catalysis, ATP synthesis in the catalytic domain of F(1) is coupled via a rotary mechanism of the central stalk subunits to proton translocation. Key component of the F(0) channel; it plays a direct role in translocation across the membrane. A homomeric c-ring of between 10-14 subunits forms the central stalk rotor element with the F(1) delta and epsilon subunits. The chain is ATP synthase subunit c from Desulfotalea psychrophila (strain LSv54 / DSM 12343).